Here is a 375-residue protein sequence, read N- to C-terminus: OVARIAN TUMOR DOMAIN-containing deubiquitinating enzyme 7 (375 aa).

Positions methionine 1–lysine 18 are enriched in basic residues. The tract at residues methionine 1–cysteine 23 is disordered. The OTU domain occupies leucine 37–lysine 161. The active site involves aspartate 45. Cysteine 48 functions as the Nucleophile in the catalytic mechanism. The active site involves histidine 154. A UBA-like domain is found at histidine 202–leucine 250. 2 stretches are compositionally biased toward polar residues: residues threonine 251–isoleucine 264 and alanine 290–glutamine 305. The tract at residues threonine 251–threonine 306 is disordered. The Nuclear localization signal motif lies at aspartate 308–lysine 315.

This sequence belongs to the peptidase C85 family.

It is found in the nucleus. It carries out the reaction Thiol-dependent hydrolysis of ester, thioester, amide, peptide and isopeptide bonds formed by the C-terminal Gly of ubiquitin (a 76-residue protein attached to proteins as an intracellular targeting signal).. Functionally, hydrolase that can remove conjugated ubiquitin from proteins in vitro and may therefore play an important regulatory role at the level of protein turnover by preventing degradation. Cysteine protease with a preference for 'Lys-63' over 'Lys-48' over 'Met-1' -linked ubiquitin (UB) tetramers as substrates. Also cleaves RUB-GST fusion. This Arabidopsis thaliana (Mouse-ear cress) protein is OVARIAN TUMOR DOMAIN-containing deubiquitinating enzyme 7.